The chain runs to 850 residues: Pentatricopeptide repeat-containing protein At3g49170, chloroplastic (850 aa).

The transit peptide at 1–50 (MAMISFSFPSPAKLPIKSQPSVSNRINVADRLILRHLNAGDLRGAVSALD) directs the protein to the chloroplast. 17 PPR repeats span residues 61-95 (DSVT…DIEP), 96-130 (DSVL…GKRD), 131-164 (VVSW…GLVP), 165-199 (NDYC…GHFE), 201-232 (DVCV…MSEL), 233-267 (NVVT…GFES), 268-302 (DKFT…GLVD), 303-334 (DVEC…MEDH), 335-370 (SVMS…GHVE), 372-406 (NHFT…GLAS), 407-437 (NSSV…LSEK), 438-472 (NLVS…ELGV), 473-507 (SAFT…GLSC), 508-538 (NQPV…MENR), 539-573 (NVIS…GVKP), 574-609 (NEVT…KIKP), and 610-640 (KMEH…MPFQ). The interval 645-720 (VWRTFLGACR…EGGCSWIEVG (76 aa)) is type E motif. The type E(+) motif stretch occupies residues 721–751 (DKIHKFYVGDTAHPNAHQIYDELDRLITEIK). Residues 752 to 850 (RCGYVPDTDL…DGKCSCNDYW (99 aa)) form a type DYW motif region.

Belongs to the PPR family. PCMP-H subfamily.

The protein resides in the plastid. The protein localises to the chloroplast. Its function is as follows. May play a role in embryogenesis. The chain is Pentatricopeptide repeat-containing protein At3g49170, chloroplastic (EMB2261) from Arabidopsis thaliana (Mouse-ear cress).